An 88-amino-acid polypeptide reads, in one-letter code: Small ribosomal subunit protein bS20 (88 aa).

The span at 1 to 21 (MANSKSAKKRALQSEKRRQHN) shows a compositional bias: basic residues. Residues 1–27 (MANSKSAKKRALQSEKRRQHNASRSSM) are disordered.

The protein belongs to the bacterial ribosomal protein bS20 family.

In terms of biological role, binds directly to 16S ribosomal RNA. The protein is Small ribosomal subunit protein bS20 of Shewanella piezotolerans (strain WP3 / JCM 13877).